Here is an 80-residue protein sequence, read N- to C-terminus: Probable Rubredoxin-1 (80 aa).

In terms of domain architecture, Rubredoxin-like spans 19-72 (YRKYKCKVCGWVYDPLKGDPSQNIPPKTPFEELPDTWICPVCRGKVGKESFEPL). 4 residues coordinate Fe cation: C24, C27, C57, and C60.

Belongs to the rubredoxin family. Requires Fe(3+) as cofactor.

Its function is as follows. Rubredoxin is a small nonheme, iron protein lacking acid-labile sulfide. Its single Fe, chelated to 4 Cys, functions as an electron acceptor and may also stabilize the conformation of the molecule. The polypeptide is Probable Rubredoxin-1 (Methanocaldococcus jannaschii (strain ATCC 43067 / DSM 2661 / JAL-1 / JCM 10045 / NBRC 100440) (Methanococcus jannaschii)).